Here is a 204-residue protein sequence, read N- to C-terminus: Holliday junction branch migration complex subunit RuvA (204 aa).

The tract at residues 1–67 (MIAFLSGHLV…ETELVLYGFG (67 aa)) is domain I. The segment at 68 to 146 (SPAERDVFVE…HWRQGLENAD (79 aa)) is domain II. The interval 147–156 (RPLAGGPPPA) is flexible linker. The interval 156 to 204 (AIREEVEMALLALGYSLQEIQAALQALPSQPRPTEEWLRDAITYLSRQP) is domain III.

This sequence belongs to the RuvA family. Homotetramer. Forms an RuvA(8)-RuvB(12)-Holliday junction (HJ) complex. HJ DNA is sandwiched between 2 RuvA tetramers; dsDNA enters through RuvA and exits via RuvB. An RuvB hexamer assembles on each DNA strand where it exits the tetramer. Each RuvB hexamer is contacted by two RuvA subunits (via domain III) on 2 adjacent RuvB subunits; this complex drives branch migration. In the full resolvosome a probable DNA-RuvA(4)-RuvB(12)-RuvC(2) complex forms which resolves the HJ.

It is found in the cytoplasm. Its function is as follows. The RuvA-RuvB-RuvC complex processes Holliday junction (HJ) DNA during genetic recombination and DNA repair, while the RuvA-RuvB complex plays an important role in the rescue of blocked DNA replication forks via replication fork reversal (RFR). RuvA specifically binds to HJ cruciform DNA, conferring on it an open structure. The RuvB hexamer acts as an ATP-dependent pump, pulling dsDNA into and through the RuvAB complex. HJ branch migration allows RuvC to scan DNA until it finds its consensus sequence, where it cleaves and resolves the cruciform DNA. This is Holliday junction branch migration complex subunit RuvA from Synechococcus sp. (strain JA-3-3Ab) (Cyanobacteria bacterium Yellowstone A-Prime).